Consider the following 1486-residue polypeptide: Chromosome partition protein MukB (1486 aa).

Residue 34–41 (GGNGAGKS) participates in ATP binding. Coiled-coil stretches lie at residues 326–418 (LEAD…QYNQ), 444–480 (LETF…QAYQ), and 509–603 (RHLA…RAPV). A flexible hinge region spans residues 666 to 783 (PGGSEDQRLN…EVPLFGRAAR (118 aa)). 3 coiled-coil regions span residues 835 to 923 (EAEI…AKLE), 977 to 1115 (EMLS…TAKA), and 1209 to 1266 (VEAI…QNVS).

Belongs to the SMC family. MukB subfamily. In terms of assembly, homodimerization via its hinge domain. Binds to DNA via its C-terminal region. Interacts, and probably forms a ternary complex, with MukE and MukF via its C-terminal region. The complex formation is stimulated by calcium or magnesium. Interacts with tubulin-related protein FtsZ.

The protein localises to the cytoplasm. It is found in the nucleoid. Functionally, plays a central role in chromosome condensation, segregation and cell cycle progression. Functions as a homodimer, which is essential for chromosome partition. Involved in negative DNA supercoiling in vivo, and by this means organize and compact chromosomes. May achieve or facilitate chromosome segregation by condensation DNA from both sides of a centrally located replisome during cell division. This Escherichia coli O127:H6 (strain E2348/69 / EPEC) protein is Chromosome partition protein MukB.